A 207-amino-acid polypeptide reads, in one-letter code: Dephospho-CoA kinase (207 aa).

Residues I10–P207 form the DPCK domain. Position 18-23 (G18–A23) interacts with ATP.

Belongs to the CoaE family.

The protein resides in the cytoplasm. It catalyses the reaction 3'-dephospho-CoA + ATP = ADP + CoA + H(+). It participates in cofactor biosynthesis; coenzyme A biosynthesis; CoA from (R)-pantothenate: step 5/5. In terms of biological role, catalyzes the phosphorylation of the 3'-hydroxyl group of dephosphocoenzyme A to form coenzyme A. The sequence is that of Dephospho-CoA kinase from Pseudomonas putida (strain ATCC 47054 / DSM 6125 / CFBP 8728 / NCIMB 11950 / KT2440).